Here is a 217-residue protein sequence, read N- to C-terminus: Large ribosomal subunit protein uL4c (217 aa).

Residues 51–85 are disordered; that stretch reads HRNRNAHTQTRGEVSGGGRKPWKQKGTGRARAGSN.

It belongs to the universal ribosomal protein uL4 family. Part of the 50S ribosomal subunit.

It localises to the plastid. It is found in the chloroplast. Its function is as follows. Probably binds the 23S rRNA. The sequence is that of Large ribosomal subunit protein uL4c (rpl4) from Gracilaria tenuistipitata var. liui (Red alga).